The sequence spans 623 residues: Keratin, type I cytoskeletal 9 (623 aa).

A compositionally biased stretch (low complexity) spans 1–13 (MSCRQFSSSYLSR). The segment at 1 to 25 (MSCRQFSSSYLSRSGGGGGGGLGSG) is disordered. The tract at residues 1–152 (MSCRQFSSSY…GGDGGILTAN (152 aa)) is head. Phosphoserine is present on residues S14 and S57. A compositionally biased stretch (gly residues) spans 14–25 (SGGGGGGGLGSG). Positions 153 to 188 (EKSTMQELNSRLASYLDKVQALEEANNDLENKIQDW) are coil 1A. The region spanning 153-465 (EKSTMQELNS…NLLEGGQEDF (313 aa)) is the IF rod domain. Residues 189–207 (YDKKGPAAIQKNYSPYYNT) form a linker 1 region. Positions 208–299 (IDDLKDQIVD…KNHKEEMSQL (92 aa)) are coil 1B. Residues 300-322 (TGQNSGDVNVEINVAPGKDLTKT) form a linker 12 region. The coil 2 stretch occupies residues 323-461 (LNDMRQEYEQ…ETYHNLLEGG (139 aa)). Disordered stretches follow at residues 462-496 (QEDF…SGGS) and 534-623 (YGGG…SSHS). The tail stretch occupies residues 462–623 (QEDFESSGAG…GGGSGKSSHS (162 aa)). A compositionally biased stretch (gly residues) spans 471 to 496 (GKIGLGGRGGSGGSYGRGSRGGSGGS).

The protein belongs to the intermediate filament family. As to quaternary structure, heterotetramer of two type I and two type II keratins. In terms of tissue distribution, expressed in the terminally differentiated epidermis of palms and soles.

May serve an important special function either in the mature palmar and plantar skin tissue or in the morphogenetic program of the formation of these tissues. Plays a role in keratin filament assembly. The polypeptide is Keratin, type I cytoskeletal 9 (KRT9) (Homo sapiens (Human)).